Reading from the N-terminus, the 279-residue chain is Four and a half LIM domains protein 2 (279 aa).

The C4-type zinc-finger motif lies at 7 to 31 (CHHCNESLYGKKYILKEENPHCVAC). LIM zinc-binding domains lie at 40–92 (CEEC…CTDC), 101–153 (CQEC…CVPC), and 162–212 (CVQC…CLTC). Lysine 78 is covalently cross-linked (Glycyl lysine isopeptide (Lys-Gly) (interchain with G-Cter in SUMO2)). Glycyl lysine isopeptide (Lys-Gly) (interchain with G-Cter in SUMO2) cross-links involve residues lysine 167 and lysine 220. One can recognise an LIM zinc-binding 4 domain in the interval 221–275 (CAGCTNPISGLGGTKYISFEERQWHNDCFNCKKCSLSLVGRGFLTERDDILCPDC). A Phosphoserine modification is found at serine 238.

As to quaternary structure, interacts with ZNF638 and TTN/titin. Interacts with E4F1. Interacts with GRB7. Interacts with SIRT1 and FOXO1. Interacts with CEFIP. Interacts with calcineurin. Interacts with FOXK1. As to expression, highly expressed in heart but also detectable in brain and skeletal muscle.

Its subcellular location is the cytoplasm. The protein resides in the nucleus. It localises to the myofibril. The protein localises to the sarcomere. It is found in the z line. Its function is as follows. May function as a molecular transmitter linking various signaling pathways to transcriptional regulation. Negatively regulates the transcriptional repressor E4F1 and may function in cell growth. Inhibits the transcriptional activity of FOXO1 and its apoptotic function by enhancing the interaction of FOXO1 with SIRT1 and FOXO1 deacetylation. Negatively regulates the calcineurin/NFAT signaling pathway in cardiomyocytes. This chain is Four and a half LIM domains protein 2 (Fhl2), found in Mus musculus (Mouse).